The sequence spans 322 residues: Uridylate-specific endoribonuclease EndoU (322 aa).

The helical transmembrane segment at 25–45 (FVIVGLLITIGILSWHFYEYF) threads the bilayer. Residues 53–322 (TPDDVLTLSK…LIGTVYPDSS (270 aa)) enclose the EndoU domain. Active-site residues include histidine 200, histidine 215, and lysine 259.

Belongs to the ENDOU family. As to quaternary structure, monomer. Mn(2+) serves as cofactor. Predominantly expressed in head.

The protein localises to the membrane. The enzyme catalyses a ribonucleotidyl-ribonucleotide-RNA = a 3'-end 2',3'-cyclophospho-ribonucleotide-RNA + a 5'-end dephospho-ribonucleoside-RNA. Its function is as follows. Endoribonuclease that cleaves single-stranded RNAs at uridylates and releases products that have 2'-3'-cyclic phosphate termini. Preferentially cleaves single stranded RNA at poly-U sites with CU, UC and AU sites cleaved less efficiently. May target mRNAs encoding proteins involved in lipid metabolism to regulate their expression. Regulates levels of TBPH protein, but not mRNA, by an as yet unknown mechanism. Important for neuronal development or function. This is Uridylate-specific endoribonuclease EndoU from Drosophila melanogaster (Fruit fly).